We begin with the raw amino-acid sequence, 156 residues long: Small ribosomal subunit protein uS7 (156 aa).

This sequence belongs to the universal ribosomal protein uS7 family. Part of the 30S ribosomal subunit. Contacts proteins S9 and S11.

One of the primary rRNA binding proteins, it binds directly to 16S rRNA where it nucleates assembly of the head domain of the 30S subunit. Is located at the subunit interface close to the decoding center, probably blocks exit of the E-site tRNA. The protein is Small ribosomal subunit protein uS7 of Polynucleobacter necessarius subsp. necessarius (strain STIR1).